Reading from the N-terminus, the 304-residue chain is Oxygen-dependent coproporphyrinogen-III oxidase (304 aa).

S95 is a binding site for substrate. Positions 99 and 109 each coordinate a divalent metal cation. The active-site Proton donor is H109. N111–R113 serves as a coordination point for substrate. 2 residues coordinate a divalent metal cation: H148 and H178. The tract at residues Y243–R278 is important for dimerization. G261–R263 contributes to the substrate binding site.

This sequence belongs to the aerobic coproporphyrinogen-III oxidase family. Homodimer. It depends on a divalent metal cation as a cofactor.

It is found in the cytoplasm. The catalysed reaction is coproporphyrinogen III + O2 + 2 H(+) = protoporphyrinogen IX + 2 CO2 + 2 H2O. The protein operates within porphyrin-containing compound metabolism; protoporphyrin-IX biosynthesis; protoporphyrinogen-IX from coproporphyrinogen-III (O2 route): step 1/1. Involved in the heme biosynthesis. Catalyzes the aerobic oxidative decarboxylation of propionate groups of rings A and B of coproporphyrinogen-III to yield the vinyl groups in protoporphyrinogen-IX. The sequence is that of Oxygen-dependent coproporphyrinogen-III oxidase from Thioalkalivibrio sulfidiphilus (strain HL-EbGR7).